The primary structure comprises 276 residues: 2-dehydro-3-deoxyphosphooctonate aldolase (276 aa).

Belongs to the KdsA family.

The protein resides in the cytoplasm. The enzyme catalyses D-arabinose 5-phosphate + phosphoenolpyruvate + H2O = 3-deoxy-alpha-D-manno-2-octulosonate-8-phosphate + phosphate. It participates in carbohydrate biosynthesis; 3-deoxy-D-manno-octulosonate biosynthesis; 3-deoxy-D-manno-octulosonate from D-ribulose 5-phosphate: step 2/3. It functions in the pathway bacterial outer membrane biogenesis; lipopolysaccharide biosynthesis. The chain is 2-dehydro-3-deoxyphosphooctonate aldolase from Helicobacter pylori (strain Shi470).